The following is a 206-amino-acid chain: Large ribosomal subunit protein uL4 (206 aa).

Residues 46-78 (GNRAQKDREQVKHTTKKPWRQKGTGRARAGMSS) are disordered. Residues 58 to 70 (HTTKKPWRQKGTG) show a composition bias toward basic residues.

This sequence belongs to the universal ribosomal protein uL4 family. Part of the 50S ribosomal subunit.

Its function is as follows. One of the primary rRNA binding proteins, this protein initially binds near the 5'-end of the 23S rRNA. It is important during the early stages of 50S assembly. It makes multiple contacts with different domains of the 23S rRNA in the assembled 50S subunit and ribosome. Functionally, forms part of the polypeptide exit tunnel. The protein is Large ribosomal subunit protein uL4 of Burkholderia lata (strain ATCC 17760 / DSM 23089 / LMG 22485 / NCIMB 9086 / R18194 / 383).